A 240-amino-acid chain; its full sequence is Thiopurine S-methyltransferase (240 aa).

Position 24–35 (24–35) interacts with S-adenosyl-L-methionine; sequence WKDKWVTRHISF. Phe35 contacts substrate. Lys53 is subject to N6-acetyllysine. S-adenosyl-L-methionine-binding positions include Leu64, Glu85, 129–130, and Arg147; that span reads SI.

It belongs to the class I-like SAM-binding methyltransferase superfamily. TPMT family. Monomer.

The protein localises to the cytoplasm. The catalysed reaction is S-adenosyl-L-methionine + a thiopurine = S-adenosyl-L-homocysteine + a thiopurine S-methylether.. It carries out the reaction mercaptopurine + S-adenosyl-L-methionine = 6-methylthiopurine + S-adenosyl-L-homocysteine + H(+). Catalyzes the S-methylation of thiopurine drugs such as 6-mercaptopurine (also called mercaptopurine, 6-MP or its brand name Purinethol) using S-adenosyl-L-methionine as the methyl donor. TPMT activity modulates the cytotoxic effects of thiopurine prodrugs. A natural substrate for this enzyme has yet to be identified. This chain is Thiopurine S-methyltransferase (Tpmt), found in Mus spretus (Western Mediterranean mouse).